Here is a 348-residue protein sequence, read N- to C-terminus: 3-isopropylmalate dehydrogenase (348 aa).

76–87 (GPKWTDPNNRPE) is an NAD(+) binding site. 4 residues coordinate substrate: Arg94, Arg104, Arg132, and Asp217. Mg(2+) is bound by residues Asp217, Asp241, and Asp245. NAD(+) is bound at residue 275-287 (GSAPDIAGKNVAN).

The protein belongs to the isocitrate and isopropylmalate dehydrogenases family. LeuB type 1 subfamily. In terms of assembly, homodimer. Requires Mg(2+) as cofactor. The cofactor is Mn(2+).

Its subcellular location is the cytoplasm. The enzyme catalyses (2R,3S)-3-isopropylmalate + NAD(+) = 4-methyl-2-oxopentanoate + CO2 + NADH. Its pathway is amino-acid biosynthesis; L-leucine biosynthesis; L-leucine from 3-methyl-2-oxobutanoate: step 3/4. Its function is as follows. Catalyzes the oxidation of 3-carboxy-2-hydroxy-4-methylpentanoate (3-isopropylmalate) to 3-carboxy-4-methyl-2-oxopentanoate. The product decarboxylates to 4-methyl-2 oxopentanoate. The protein is 3-isopropylmalate dehydrogenase of Staphylococcus aureus (strain bovine RF122 / ET3-1).